A 1018-amino-acid polypeptide reads, in one-letter code: 2-oxoglutarate dehydrogenase-like, mitochondrial (1018 aa).

H138, D151, and D153 together coordinate Ca(2+). R307, D406, N439, I441, and Q671 together coordinate thiamine diphosphate. Residues D406, N439, and I441 each contribute to the Mg(2+) site.

The protein belongs to the alpha-ketoglutarate dehydrogenase family. The OGDHC complex comprises multiple copies of three catalytic enzyme components, the 2-oxoglutarate dehydrogenase (OGDH/E1), the dihydrolipoamide dehydrogenase (DLST/E2) and the dihydrolipoamide dehydrogenase (DLD/E3). OGDHL/E1-like isoenzyme may replace OGDH in the OGDHC complex in the brain. Requires thiamine diphosphate as cofactor. The cofactor is Mg(2+).

Its subcellular location is the mitochondrion matrix. The catalysed reaction is N(6)-[(R)-lipoyl]-L-lysyl-[protein] + 2-oxoglutarate + H(+) = N(6)-[(R)-S(8)-succinyldihydrolipoyl]-L-lysyl-[protein] + CO2. Functionally, 2-oxoglutarate dehydrogenase (E1-like) component of the 2-oxoglutarate dehydrogenase multienzyme complex (OGDHC) which mediates the decarboxylation of alpha-ketoglutarate in the tricarboxylic acid cycle. The OGDHC complex catalyzes the overall conversion of 2-oxoglutarate to succinyl-CoA and CO(2) while reducing NAD(+) to NADH. The OGDHC complex is mainly active in the mitochondrion. Involved in the inhibition of cell proliferation and in apoptosis. The chain is 2-oxoglutarate dehydrogenase-like, mitochondrial (ogdhl) from Xenopus laevis (African clawed frog).